Consider the following 411-residue polypeptide: MKNTTKPCRTEHHNAEGQRDRMEGNKKGETKAKKSVACSHCKKRFSHKAHLQIHMRVHTGEKPYRCDQCGKCFPYKQSLKLHLDIHAKGNPYTCDECGESFKTRLQLRSHMTLHPKYKPYKCDQCEKSYGREDHLQRHMKLHTGEKPHKCEHCGKSFPMRDLLRSHLMVHSEVKPYTCDQCGKGFTLKKSYNEHMNIHTGERPYTCDQCGKGFPYEQSLNLHMRFHREEKPFTCDQCGQSFSQKGAYNIHMKIHTGEKPYTCDQCGMSFRHGYSLKLHMTHHTGEKPFHCDQCDKCYSTALFLKNHIKTHDKAQIYSCLTCGKTFNQLRGLRLHEKRHSLTKPFMCFDCGKCYFTDTELKQHLPVHSNERPYMCSLCFKSFPRMGSLIVHEKTHNGEKPDCRTGSKKSQDE.

Positions 1–33 are disordered; it reads MKNTTKPCRTEHHNAEGQRDRMEGNKKGETKAK. Positions 8–32 are enriched in basic and acidic residues; the sequence is CRTEHHNAEGQRDRMEGNKKGETKA. 13 C2H2-type zinc fingers span residues 36–58, 64–86, 92–114, 120–142, 148–170, 176–198, 204–226, 232–254, 260–282, 288–310, 316–338, 344–366, and 372–394; these read VACSHCKKRFSHKAHLQIHMRVH, YRCDQCGKCFPYKQSLKLHLDIH, YTCDECGESFKTRLQLRSHMTLH, YKCDQCEKSYGREDHLQRHMKLH, HKCEHCGKSFPMRDLLRSHLMVH, YTCDQCGKGFTLKKSYNEHMNIH, YTCDQCGKGFPYEQSLNLHMRFH, FTCDQCGQSFSQKGAYNIHMKIH, YTCDQCGMSFRHGYSLKLHMTHH, FHCDQCDKCYSTALFLKNHIKTH, YSCLTCGKTFNQLRGLRLHEKRH, FMCFDCGKCYFTDTELKQHLPVH, and YMCSLCFKSFPRMGSLIVHEKTH.

In terms of tissue distribution, specifically expressed in the hematopoietic lineage during embryogenesis; first expressed at the late blastula stage around the blastoderm margin. During gastrulation, restricted to the ventral mesoderm, the presumptive prechordal plate and the dorso-marginal cells of the organizer. At the 3-somite stage, strongly expressed in a caudal domain (marking the erythroid lineage) and a cephalic domain of the lateral mesoderm. At the 8- to 10-somite stage, caudal expression is in two bands of lateral mesoderm which later converge at the midline. Anterior expression is also in two bands of lateral mesoderm which converge as two patches at the midline by the 15-somite stage, with increased scattering of single cells (macrophage precursors) away from the midline to the yolksac. Once at the yolksac, expression is lost. By 20-24 hours post-fertilization (hpf), expressed in proerythroblasts in the erythroid blood island centered above the uro-genital opening. Expression persists in circulating erythroblasts but is lost in mature erythrocytes.

The polypeptide is Zinc finger protein draculin (Danio rerio (Zebrafish)).